The sequence spans 226 residues: Phosphoribosylformylglycinamidine synthase subunit PurQ (226 aa).

Residues 2-226 form the Glutamine amidotransferase type-1 domain; it reads KFAVIQFPGS…LKNFLVTVKN (225 aa). Cys-86 serves as the catalytic Nucleophile. Catalysis depends on residues His-195 and Glu-197.

In terms of assembly, part of the FGAM synthase complex composed of 1 PurL, 1 PurQ and 2 PurS subunits.

It is found in the cytoplasm. The catalysed reaction is N(2)-formyl-N(1)-(5-phospho-beta-D-ribosyl)glycinamide + L-glutamine + ATP + H2O = 2-formamido-N(1)-(5-O-phospho-beta-D-ribosyl)acetamidine + L-glutamate + ADP + phosphate + H(+). The enzyme catalyses L-glutamine + H2O = L-glutamate + NH4(+). Its pathway is purine metabolism; IMP biosynthesis via de novo pathway; 5-amino-1-(5-phospho-D-ribosyl)imidazole from N(2)-formyl-N(1)-(5-phospho-D-ribosyl)glycinamide: step 1/2. In terms of biological role, part of the phosphoribosylformylglycinamidine synthase complex involved in the purines biosynthetic pathway. Catalyzes the ATP-dependent conversion of formylglycinamide ribonucleotide (FGAR) and glutamine to yield formylglycinamidine ribonucleotide (FGAM) and glutamate. The FGAM synthase complex is composed of three subunits. PurQ produces an ammonia molecule by converting glutamine to glutamate. PurL transfers the ammonia molecule to FGAR to form FGAM in an ATP-dependent manner. PurS interacts with PurQ and PurL and is thought to assist in the transfer of the ammonia molecule from PurQ to PurL. The protein is Phosphoribosylformylglycinamidine synthase subunit PurQ of Lactococcus lactis subsp. cremoris (Streptococcus cremoris).